Here is a 404-residue protein sequence, read N- to C-terminus: Probable ribosomal oxygenase HI_0396 (404 aa).

In terms of domain architecture, JmjC spans 102–231 (ELGQLWNKFG…LIDGISKGFC (130 aa)). The Fe cation site is built by H135, D137, and H199.

This sequence belongs to the ROX family. Fe(2+) serves as cofactor.

In terms of biological role, oxygenase that catalyzes the hydroxylation of a ribosomal protein. This is Probable ribosomal oxygenase HI_0396 from Haemophilus influenzae (strain ATCC 51907 / DSM 11121 / KW20 / Rd).